The sequence spans 553 residues: Cytochrome P450 86A2 (553 aa).

Residues 2–20 (DVSNTMLLVAVVAAYWLWF) form a helical membrane-spanning segment. Cysteine 459 provides a ligand contact to heme.

It belongs to the cytochrome P450 family. Requires heme as cofactor. In terms of tissue distribution, expressed in leaves, stems, flowers and siliques. Expressed at low levels in roots. Expressed in guard cells of cotyledons and leaves.

Its subcellular location is the membrane. It catalyses the reaction an organic molecule + reduced [NADPH--hemoprotein reductase] + O2 = an alcohol + oxidized [NADPH--hemoprotein reductase] + H2O + H(+). In terms of biological role, catalyzes the omega-hydroxylation of various fatty acids (FA). Acts on saturated and unsaturated fatty acids with chain lengths from C12 to C18. Plays a major role in the biosynthesis of extracellular lipids. Involved in the biosynthesis of hydroxylated fatty acids required for cutin biosynthesis, cuticle development and repression of bacterial type III gene expression. This Arabidopsis thaliana (Mouse-ear cress) protein is Cytochrome P450 86A2 (CYP86A2).